The following is a 334-amino-acid chain: Glycerol-3-phosphate dehydrogenase [NAD(P)+] (334 aa).

NADPH is bound by residues tryptophan 13, arginine 33, and lysine 106. The sn-glycerol 3-phosphate site is built by lysine 106, glycine 137, and serine 139. NADPH is bound at residue alanine 141. Residues lysine 192, aspartate 245, serine 255, arginine 256, and asparagine 257 each contribute to the sn-glycerol 3-phosphate site. The active-site Proton acceptor is lysine 192. Arginine 256 lines the NADPH pocket. 2 residues coordinate NADPH: valine 280 and glutamate 282.

The protein belongs to the NAD-dependent glycerol-3-phosphate dehydrogenase family.

It localises to the cytoplasm. It catalyses the reaction sn-glycerol 3-phosphate + NAD(+) = dihydroxyacetone phosphate + NADH + H(+). The catalysed reaction is sn-glycerol 3-phosphate + NADP(+) = dihydroxyacetone phosphate + NADPH + H(+). It functions in the pathway membrane lipid metabolism; glycerophospholipid metabolism. Its function is as follows. Catalyzes the reduction of the glycolytic intermediate dihydroxyacetone phosphate (DHAP) to sn-glycerol 3-phosphate (G3P), the key precursor for phospholipid synthesis. This chain is Glycerol-3-phosphate dehydrogenase [NAD(P)+], found in Chlamydia muridarum (strain MoPn / Nigg).